The sequence spans 246 residues: UPF0309 protein ABC0887 (246 aa).

The region spanning 33–212 (MVHAIKEGKS…VLKMIEQLEE (180 aa)) is the SIS domain.

Belongs to the UPF0309 family.

This chain is UPF0309 protein ABC0887, found in Shouchella clausii (strain KSM-K16) (Alkalihalobacillus clausii).